The primary structure comprises 991 residues: Translation initiation factor IF-2 (991 aa).

Disordered stretches follow at residues 126–220 (QADH…DVGE) and 325–359 (VKAAGDGDTAPAADDALAGKKKPGKKKKKPDVDEK). 2 stretches are compositionally biased toward polar residues: residues 138-160 (QTESAVQTESAVQTESAVQTEPA) and 201-210 (PAAQTESAVQ). The segment covering 326 to 340 (KAAGDGDTAPAADDA) has biased composition (low complexity). Over residues 343–353 (GKKKPGKKKKK) the composition is skewed to basic residues. One can recognise a tr-type G domain in the interval 488-658 (IRPPVVTIMG…LTEAEIRELK (171 aa)). Positions 497-504 (GHVDHGKT) are G1. Position 497-504 (497-504 (GHVDHGKT)) interacts with GTP. The interval 522-526 (GITQH) is G2. The interval 544-547 (DTPG) is G3. Residues 544–548 (DTPGH) and 598–601 (NKID) each bind GTP. The interval 598–601 (NKID) is G4. Residues 634 to 636 (SAK) are G5.

This sequence belongs to the TRAFAC class translation factor GTPase superfamily. Classic translation factor GTPase family. IF-2 subfamily.

The protein localises to the cytoplasm. One of the essential components for the initiation of protein synthesis. Protects formylmethionyl-tRNA from spontaneous hydrolysis and promotes its binding to the 30S ribosomal subunits. Also involved in the hydrolysis of GTP during the formation of the 70S ribosomal complex. The protein is Translation initiation factor IF-2 of Chlorobium phaeobacteroides (strain DSM 266 / SMG 266 / 2430).